A 700-amino-acid polypeptide reads, in one-letter code: Elongation factor G 1 (700 aa).

A tr-type G domain is found at 8–290; the sequence is ERYRNIGISA…AVIEYLPSPI (283 aa). GTP contacts are provided by residues 17–24, 88–92, and 142–145; these read AHIDAGKT, DTPGH, and NKMD.

This sequence belongs to the TRAFAC class translation factor GTPase superfamily. Classic translation factor GTPase family. EF-G/EF-2 subfamily.

It localises to the cytoplasm. Catalyzes the GTP-dependent ribosomal translocation step during translation elongation. During this step, the ribosome changes from the pre-translocational (PRE) to the post-translocational (POST) state as the newly formed A-site-bound peptidyl-tRNA and P-site-bound deacylated tRNA move to the P and E sites, respectively. Catalyzes the coordinated movement of the two tRNA molecules, the mRNA and conformational changes in the ribosome. The polypeptide is Elongation factor G 1 (Bordetella avium (strain 197N)).